A 483-amino-acid polypeptide reads, in one-letter code: Bifunctional pantoate ligase/cytidylate kinase (483 aa).

The tract at residues 1–246 (MPTMGALHAG…CGSTRLIDHA (246 aa)) is pantoate--beta-alanine ligase. Residue 4–11 (MGALHAGH) participates in ATP binding. Catalysis depends on H11, which acts as the Proton donor. Position 34 (Q34) interacts with (R)-pantoate. Q34 serves as a coordination point for beta-alanine. 124-127 (GEKD) contacts ATP. A (R)-pantoate-binding site is contributed by Q130. ATP is bound by residues V153 and 161–164 (LSSR). The interval 247–483 (FLMTRQPLVA…AEEAWPTPQR (237 aa)) is cytidylate kinase.

In the N-terminal section; belongs to the pantothenate synthetase family. The protein in the C-terminal section; belongs to the cytidylate kinase family. Type 1 subfamily.

Its subcellular location is the cytoplasm. It catalyses the reaction (R)-pantoate + beta-alanine + ATP = (R)-pantothenate + AMP + diphosphate + H(+). The enzyme catalyses CMP + ATP = CDP + ADP. It carries out the reaction dCMP + ATP = dCDP + ADP. Its pathway is cofactor biosynthesis; (R)-pantothenate biosynthesis; (R)-pantothenate from (R)-pantoate and beta-alanine: step 1/1. Functionally, catalyzes the condensation of pantoate with beta-alanine in an ATP-dependent reaction via a pantoyl-adenylate intermediate. Catalyzes the transfer of a phosphate group from ATP to either CMP or dCMP to form CDP or dCDP and ADP, respectively. This is Bifunctional pantoate ligase/cytidylate kinase from Synechococcus sp. (strain CC9902).